The sequence spans 344 residues: L-rhamnose-proton symporter (344 aa).

Helical transmembrane passes span A4–A24, W38–L58, F68–I88, M101–I121, T137–L157, L175–A195, L214–I234, V259–G279, I290–L310, and V323–A343.

The protein belongs to the L-rhamnose transporter (TC 2.A.7.6) family.

It is found in the cell inner membrane. The catalysed reaction is L-rhamnopyranose(in) + H(+)(in) = L-rhamnopyranose(out) + H(+)(out). Its function is as follows. Uptake of L-rhamnose across the cytoplasmic membrane with the concomitant transport of protons into the cell (symport system). In Escherichia coli O157:H7, this protein is L-rhamnose-proton symporter.